The chain runs to 202 residues: Thymidine kinase (202 aa).

ATP contacts are provided by residues 16–23 (GPMFSGKS) and 99–102 (DEVQ). Catalysis depends on Glu-100, which acts as the Proton acceptor. 4 residues coordinate Zn(2+): Cys-156, Cys-159, Cys-194, and His-197.

The protein belongs to the thymidine kinase family. Homotetramer.

It is found in the cytoplasm. The enzyme catalyses thymidine + ATP = dTMP + ADP + H(+). The polypeptide is Thymidine kinase (Deinococcus deserti (strain DSM 17065 / CIP 109153 / LMG 22923 / VCD115)).